Here is a 329-residue protein sequence, read N- to C-terminus: MELHILEHRVRVLSLARPGLWLYTHPLIKLLFLPRRSRCKFFSLTETPEDYTLMVDEEGFKELPPSEFLQVAEATWLVLNVSSPSGAAVQAAGVTKIARSVIAPLAEHHVSVLMLSTYQTDFILVREQDLSVVIHTLAREFDIYREVGGEPVPVARDDSSNGFPRAQHGPSPTVHPIQSPQNRFCVLTLDPETLPAIATTLIDVLFYSHSPPREAASGGPGSSSIAFFAFSLIEGYISIVMDAETQKKFPSDLLLTSSSGELWRMVRIGGQPLGFDECGIVAQIAGPLAAADISAYYISTFNFDHALVPEDGIGSVIEVLQRRQDGLGS.

S14 is subject to Phosphoserine. ACT domains are found at residues 72–138 and 260–321; these read AEAT…HTLA and GELW…EVLQ. Residues 111–112, G274, 280–281, and 300–304 contribute to the L-arginine site; these read SV, IV, and TFNFD.

This sequence belongs to the GATS family. In terms of assembly, forms homodimers and heterodimers with CASTOR2. Interacts with the GATOR2 complex which is composed of MIOS, SEC13, SEH1L, WDR24 and WDR59; the interaction is negatively regulated by arginine. Interacts with TM4SF5; the interaction is positively regulated by leucine and is negatively regulated by arginine. In terms of processing, phosphorylation at Ser-14 by AKT1, promoting the interaction between CASTOR1 and RNF167. Ubiquitinated by RNF167 via 'Lys-29'-polyubiquitination, leading to its degradation, releasing the GATOR2 complex. Ubiquitination by RNF167 is promoted by phosphorylation at Ser-14 by AKT1.

Its subcellular location is the cytoplasm. It localises to the cytosol. Functionally, functions as an intracellular arginine sensor within the amino acid-sensing branch of the TORC1 signaling pathway. As a homodimer or a heterodimer with CASTOR2, binds and inhibits the GATOR subcomplex GATOR2 and thereby mTORC1. Binding of arginine to CASTOR1 allosterically disrupts the interaction of CASTOR1-containing dimers with GATOR2 which can in turn activate mTORC1 and the TORC1 signaling pathway. The chain is Cytosolic arginine sensor for mTORC1 subunit 1 from Bos taurus (Bovine).